Reading from the N-terminus, the 434-residue chain is Glutamate/glutamine/aspartate/asparagine transport system permease protein BztC (434 aa).

Transmembrane regions (helical) follow at residues 41-61, 113-133, 135-155, 156-176, 180-200, 227-247, 272-292, 298-318, 360-380, and 398-418; these read LTVF…PWLL, LFVT…DALP, KLIW…WGGP, IWGP…FTAL, LGVP…WLYA, FLLA…LGIL, GVPL…FLPP, LILR…AEVI, IVSS…VGLF, and GTYW…NFSM. An ABC transmembrane type-1 domain is found at 227 to 422; the sequence is FLLALVIGVT…LFNFSMSRYS (196 aa).

The protein belongs to the binding-protein-dependent transport system permease family. HisMQ subfamily. As to quaternary structure, bztB and BztC form a heterodimer which can form a membrane complex with a homodimer of BztD.

It is found in the cell inner membrane. In terms of biological role, part of a binding-protein-dependent transport system for glutamate, glutamine, aspartate and asparagine. Probably responsible for the translocation of the substrate across the membrane. The chain is Glutamate/glutamine/aspartate/asparagine transport system permease protein BztC (bztC) from Rhodobacter capsulatus (strain ATCC BAA-309 / NBRC 16581 / SB1003).